A 246-amino-acid polypeptide reads, in one-letter code: tRNA pseudouridine synthase B (246 aa).

Catalysis depends on aspartate 44, which acts as the Nucleophile.

Belongs to the pseudouridine synthase TruB family. Type 1 subfamily.

The enzyme catalyses uridine(55) in tRNA = pseudouridine(55) in tRNA. Its function is as follows. Responsible for synthesis of pseudouridine from uracil-55 in the psi GC loop of transfer RNAs. This is tRNA pseudouridine synthase B from Desulfotalea psychrophila (strain LSv54 / DSM 12343).